A 565-amino-acid polypeptide reads, in one-letter code: NAD-dependent malic enzyme (565 aa).

The Proton donor role is filled by Tyr-104. Arg-157 is an NAD(+) binding site. Lys-175 serves as the catalytic Proton acceptor. Residues Glu-246, Asp-247, and Asp-270 each contribute to the a divalent metal cation site. Positions 270 and 418 each coordinate NAD(+).

This sequence belongs to the malic enzymes family. Homotetramer. Mg(2+) is required as a cofactor. The cofactor is Mn(2+).

It catalyses the reaction (S)-malate + NAD(+) = pyruvate + CO2 + NADH. The enzyme catalyses oxaloacetate + H(+) = pyruvate + CO2. The protein is NAD-dependent malic enzyme of Yersinia enterocolitica serotype O:8 / biotype 1B (strain NCTC 13174 / 8081).